The chain runs to 119 residues: Large ribosomal subunit protein bL20 (119 aa).

It belongs to the bacterial ribosomal protein bL20 family.

Its function is as follows. Binds directly to 23S ribosomal RNA and is necessary for the in vitro assembly process of the 50S ribosomal subunit. It is not involved in the protein synthesizing functions of that subunit. In Gloeobacter violaceus (strain ATCC 29082 / PCC 7421), this protein is Large ribosomal subunit protein bL20.